We begin with the raw amino-acid sequence, 466 residues long: Small RNA degrading nuclease 2 (466 aa).

The 157-residue stretch at 142-298 (MIAIDCEMVL…HDAEAAMKLV (157 aa)) folds into the Exonuclease domain. The segment at 426–466 (EENNASSKKRKRENHSKGTRDRRRCKPLSRRKQRSNVKRRR) is disordered. Positions 445–466 (RDRRRCKPLSRRKQRSNVKRRR) are enriched in basic residues.

The protein belongs to the REXO1/REXO3 family.

Its subcellular location is the nucleus. In terms of biological role, 3'-5' exonuclease degrading single-stranded small RNAs. The chain is Small RNA degrading nuclease 2 (SDN2) from Arabidopsis thaliana (Mouse-ear cress).